A 311-amino-acid polypeptide reads, in one-letter code: tRNA-cytidine(32) 2-sulfurtransferase (311 aa).

A PP-loop motif motif is present at residues 47–52; that stretch reads SGGKDS. Cysteine 122, cysteine 125, and cysteine 213 together coordinate [4Fe-4S] cluster.

It belongs to the TtcA family. In terms of assembly, homodimer. The cofactor is Mg(2+). Requires [4Fe-4S] cluster as cofactor.

It localises to the cytoplasm. The catalysed reaction is cytidine(32) in tRNA + S-sulfanyl-L-cysteinyl-[cysteine desulfurase] + AH2 + ATP = 2-thiocytidine(32) in tRNA + L-cysteinyl-[cysteine desulfurase] + A + AMP + diphosphate + H(+). It functions in the pathway tRNA modification. Catalyzes the ATP-dependent 2-thiolation of cytidine in position 32 of tRNA, to form 2-thiocytidine (s(2)C32). The sulfur atoms are provided by the cysteine/cysteine desulfurase (IscS) system. This Salmonella choleraesuis (strain SC-B67) protein is tRNA-cytidine(32) 2-sulfurtransferase.